We begin with the raw amino-acid sequence, 344 residues long: Holliday junction branch migration complex subunit RuvB (344 aa).

The segment at 1 to 180 (MSRIVSGEAQ…FGIPVRLEFY (180 aa)) is large ATPase domain (RuvB-L). Residues Leu-19, Arg-20, Gly-61, Lys-64, Thr-65, Thr-66, Arg-170, Tyr-180, and Arg-217 each coordinate ATP. A Mg(2+)-binding site is contributed by Thr-65. Residues 181–251 (THDELARVLL…AAAAALARLD (71 aa)) are small ATPAse domain (RuvB-S). The tract at residues 254 to 344 (EVGLDALDRR…AAPPADLFDK (91 aa)) is head domain (RuvB-H). DNA is bound by residues Arg-290, Arg-309, and Arg-314.

This sequence belongs to the RuvB family. As to quaternary structure, homohexamer. Forms an RuvA(8)-RuvB(12)-Holliday junction (HJ) complex. HJ DNA is sandwiched between 2 RuvA tetramers; dsDNA enters through RuvA and exits via RuvB. An RuvB hexamer assembles on each DNA strand where it exits the tetramer. Each RuvB hexamer is contacted by two RuvA subunits (via domain III) on 2 adjacent RuvB subunits; this complex drives branch migration. In the full resolvosome a probable DNA-RuvA(4)-RuvB(12)-RuvC(2) complex forms which resolves the HJ.

It localises to the cytoplasm. The enzyme catalyses ATP + H2O = ADP + phosphate + H(+). Functionally, the RuvA-RuvB-RuvC complex processes Holliday junction (HJ) DNA during genetic recombination and DNA repair, while the RuvA-RuvB complex plays an important role in the rescue of blocked DNA replication forks via replication fork reversal (RFR). RuvA specifically binds to HJ cruciform DNA, conferring on it an open structure. The RuvB hexamer acts as an ATP-dependent pump, pulling dsDNA into and through the RuvAB complex. RuvB forms 2 homohexamers on either side of HJ DNA bound by 1 or 2 RuvA tetramers; 4 subunits per hexamer contact DNA at a time. Coordinated motions by a converter formed by DNA-disengaged RuvB subunits stimulates ATP hydrolysis and nucleotide exchange. Immobilization of the converter enables RuvB to convert the ATP-contained energy into a lever motion, pulling 2 nucleotides of DNA out of the RuvA tetramer per ATP hydrolyzed, thus driving DNA branch migration. The RuvB motors rotate together with the DNA substrate, which together with the progressing nucleotide cycle form the mechanistic basis for DNA recombination by continuous HJ branch migration. Branch migration allows RuvC to scan DNA until it finds its consensus sequence, where it cleaves and resolves cruciform DNA. The chain is Holliday junction branch migration complex subunit RuvB from Phenylobacterium zucineum (strain HLK1).